The following is a 471-amino-acid chain: Methionine aminopeptidase 2 (471 aa).

Disordered regions lie at residues 16 to 80 and 92 to 139; these read VVDD…IDRF and CEHP…DFNR. Residues 32 to 47 are compositionally biased toward acidic residues; that stretch reads EDGDDNDDAVNEGEAV. The segment covering 52–65 has biased composition (basic residues); sequence KKKKKKNKKKKKKG. The span at 119 to 139 shows a compositional bias: basic and acidic residues; sequence AEERAKDDAKHGSDDPLDFNR. His-224 is a binding site for substrate. The a divalent metal cation site is built by Asp-244, Asp-255, and His-324. His-332 provides a ligand contact to substrate. Positions 357 and 452 each coordinate a divalent metal cation.

It belongs to the peptidase M24A family. Methionine aminopeptidase eukaryotic type 2 subfamily. It depends on Co(2+) as a cofactor. The cofactor is Zn(2+). Requires Mn(2+) as cofactor. Fe(2+) serves as cofactor.

It localises to the cytoplasm. It carries out the reaction Release of N-terminal amino acids, preferentially methionine, from peptides and arylamides.. Cotranslationally removes the N-terminal methionine from nascent proteins. The N-terminal methionine is often cleaved when the second residue in the primary sequence is small and uncharged (Met-Ala-, Cys, Gly, Pro, Ser, Thr, or Val). This chain is Methionine aminopeptidase 2, found in Yarrowia lipolytica (strain CLIB 122 / E 150) (Yeast).